We begin with the raw amino-acid sequence, 682 residues long: Putative L-type lectin-domain containing receptor kinase I.1 (682 aa).

The first 19 residues, 1-19, serve as a signal peptide directing secretion; the sequence is MAQRLHLLLLLFLICFVNL. The Extracellular segment spans residues 20 to 292; sequence ISFSSQQDLS…RPKKPEKTSP (273 aa). Residues 27 to 264 are legume-lectin like; the sequence is DLSFIYNGFN…YQYILGWSFS (238 aa). Residues N60, N130, N187, N210, and N231 are each glycosylated (N-linked (GlcNAc...) asparagine). A helical membrane pass occupies residues 293–313; the sequence is LLIVLLIILAIIVMVVVGGFY. Over 314–682 the chain is Cytoplasmic; it reads LYRRKKYAEV…SHTIIYGDGR (369 aa). The Protein kinase domain occupies 348–622; sequence FNKDGRLGRG…VQYINRHQRL (275 aa). ATP contacts are provided by residues 354–362 and K376; that span reads LGRGGFGEV. The active-site Proton acceptor is D472.

The protein in the C-terminal section; belongs to the protein kinase superfamily. Ser/Thr protein kinase family. In the N-terminal section; belongs to the leguminous lectin family.

The protein localises to the cell membrane. The enzyme catalyses L-seryl-[protein] + ATP = O-phospho-L-seryl-[protein] + ADP + H(+). It carries out the reaction L-threonyl-[protein] + ATP = O-phospho-L-threonyl-[protein] + ADP + H(+). Its function is as follows. Involved in resistance response to the pathogenic fungus Alternaria brassicicola. This is Putative L-type lectin-domain containing receptor kinase I.1 from Arabidopsis thaliana (Mouse-ear cress).